Reading from the N-terminus, the 79-residue chain is ATP synthase subunit c (79 aa).

2 consecutive transmembrane segments (helical) span residues 11 to 31 (IAVA…IGIL) and 53 to 73 (FFVV…LGLY).

It belongs to the ATPase C chain family. In terms of assembly, F-type ATPases have 2 components, F(1) - the catalytic core - and F(0) - the membrane proton channel. F(1) has five subunits: alpha(3), beta(3), gamma(1), delta(1), epsilon(1). F(0) has three main subunits: a(1), b(2) and c(10-14). The alpha and beta chains form an alternating ring which encloses part of the gamma chain. F(1) is attached to F(0) by a central stalk formed by the gamma and epsilon chains, while a peripheral stalk is formed by the delta and b chains.

The protein resides in the cell membrane. In terms of biological role, f(1)F(0) ATP synthase produces ATP from ADP in the presence of a proton or sodium gradient. F-type ATPases consist of two structural domains, F(1) containing the extramembraneous catalytic core and F(0) containing the membrane proton channel, linked together by a central stalk and a peripheral stalk. During catalysis, ATP synthesis in the catalytic domain of F(1) is coupled via a rotary mechanism of the central stalk subunits to proton translocation. Functionally, key component of the F(0) channel; it plays a direct role in translocation across the membrane. A homomeric c-ring of between 10-14 subunits forms the central stalk rotor element with the F(1) delta and epsilon subunits. The sequence is that of ATP synthase subunit c from Buchnera aphidicola subsp. Acyrthosiphon pisum (strain 5A).